Consider the following 338-residue polypeptide: Glycerol-3-phosphate dehydrogenase [NAD(P)+] (338 aa).

NADPH contacts are provided by Ser-13, Trp-14, and Lys-108. Sn-glycerol 3-phosphate-binding residues include Lys-108, Gly-139, and Ser-141. Ala-143 is a binding site for NADPH. 5 residues coordinate sn-glycerol 3-phosphate: Lys-194, Asp-247, Ser-257, Arg-258, and Asn-259. Catalysis depends on Lys-194, which acts as the Proton acceptor. Arg-258 serves as a coordination point for NADPH. 2 residues coordinate NADPH: Val-282 and Glu-284.

This sequence belongs to the NAD-dependent glycerol-3-phosphate dehydrogenase family.

It is found in the cytoplasm. It carries out the reaction sn-glycerol 3-phosphate + NAD(+) = dihydroxyacetone phosphate + NADH + H(+). The enzyme catalyses sn-glycerol 3-phosphate + NADP(+) = dihydroxyacetone phosphate + NADPH + H(+). Its pathway is membrane lipid metabolism; glycerophospholipid metabolism. In terms of biological role, catalyzes the reduction of the glycolytic intermediate dihydroxyacetone phosphate (DHAP) to sn-glycerol 3-phosphate (G3P), the key precursor for phospholipid synthesis. The chain is Glycerol-3-phosphate dehydrogenase [NAD(P)+] from Streptococcus pyogenes serotype M2 (strain MGAS10270).